Consider the following 102-residue polypeptide: NADH-quinone oxidoreductase subunit K 1 (102 aa).

A run of 3 helical transmembrane segments spans residues 5–25 (ISHY…GIFL), 31–51 (IIIL…MVAF), and 65–85 (LFIL…LVVF).

Belongs to the complex I subunit 4L family. In terms of assembly, NDH-1 is composed of 14 different subunits. Subunits NuoA, H, J, K, L, M, N constitute the membrane sector of the complex.

It is found in the cell inner membrane. It catalyses the reaction a quinone + NADH + 5 H(+)(in) = a quinol + NAD(+) + 4 H(+)(out). NDH-1 shuttles electrons from NADH, via FMN and iron-sulfur (Fe-S) centers, to quinones in the respiratory chain. The immediate electron acceptor for the enzyme in this species is believed to be ubiquinone. Couples the redox reaction to proton translocation (for every two electrons transferred, four hydrogen ions are translocated across the cytoplasmic membrane), and thus conserves the redox energy in a proton gradient. The polypeptide is NADH-quinone oxidoreductase subunit K 1 (Rhizobium meliloti (strain 1021) (Ensifer meliloti)).